The chain runs to 89 residues: ATP synthase subunit c (89 aa).

Transmembrane regions (helical) follow at residues 3 to 23 (IILG…AIGA) and 53 to 73 (FILA…ALMF).

The protein belongs to the ATPase C chain family. In terms of assembly, F-type ATPases have 2 components, F(1) - the catalytic core - and F(0) - the membrane proton channel. F(1) has five subunits: alpha(3), beta(3), gamma(1), delta(1), epsilon(1). F(0) has three main subunits: a(1), b(2) and c(10-14). The alpha and beta chains form an alternating ring which encloses part of the gamma chain. F(1) is attached to F(0) by a central stalk formed by the gamma and epsilon chains, while a peripheral stalk is formed by the delta and b chains.

It localises to the cell inner membrane. In terms of biological role, f(1)F(0) ATP synthase produces ATP from ADP in the presence of a proton or sodium gradient. F-type ATPases consist of two structural domains, F(1) containing the extramembraneous catalytic core and F(0) containing the membrane proton channel, linked together by a central stalk and a peripheral stalk. During catalysis, ATP synthesis in the catalytic domain of F(1) is coupled via a rotary mechanism of the central stalk subunits to proton translocation. Key component of the F(0) channel; it plays a direct role in translocation across the membrane. A homomeric c-ring of between 10-14 subunits forms the central stalk rotor element with the F(1) delta and epsilon subunits. The protein is ATP synthase subunit c of Verminephrobacter eiseniae (strain EF01-2).